We begin with the raw amino-acid sequence, 310 residues long: Protein N-terminal asparagine amidohydrolase (310 aa).

In terms of assembly, monomer.

It localises to the cytoplasm. The catalysed reaction is N-terminal L-asparaginyl-[protein] + H2O + H(+) = N-terminal L-aspartyl-[protein] + NH4(+). With respect to regulation, inhibited by micromolar concentrations of copper and zinc ions. Its function is as follows. N-terminal asparagine deamidase that mediates deamidation of N-terminal asparagine residues to aspartate. Required for the ubiquitin-dependent turnover of intracellular proteins that initiate with Met-Asn. These proteins are acetylated on the retained initiator methionine and can subsequently be modified by the removal of N-acetyl methionine by acylaminoacid hydrolase (AAH). Conversion of the resulting N-terminal asparagine to aspartate by NTAN1/PNAD renders the protein susceptible to arginylation, polyubiquitination and degradation as specified by the N-end rule. This enzyme does not act on substrates with internal or C-terminal asparagines and does not act on glutamine residues in any position, nor on acetylated N-terminal peptidyl Asn. The sequence is that of Protein N-terminal asparagine amidohydrolase (NTAN1) from Homo sapiens (Human).